A 249-amino-acid polypeptide reads, in one-letter code: 5'-nucleotidase SurE (249 aa).

Positions 9, 10, 40, and 92 each coordinate a divalent metal cation.

The protein belongs to the SurE nucleotidase family. A divalent metal cation is required as a cofactor.

Its subcellular location is the cytoplasm. It carries out the reaction a ribonucleoside 5'-phosphate + H2O = a ribonucleoside + phosphate. Nucleotidase that shows phosphatase activity on nucleoside 5'-monophosphates. This is 5'-nucleotidase SurE from Shewanella baltica (strain OS195).